We begin with the raw amino-acid sequence, 301 residues long: Ornithine carbamoyltransferase (301 aa).

Residues R100 and 127–130 contribute to the carbamoyl phosphate site; that span reads HPCQ. L-ornithine-binding positions include N158, D221, and 225–226; that span reads SM. C260 and R288 together coordinate carbamoyl phosphate.

This sequence belongs to the aspartate/ornithine carbamoyltransferase superfamily. OTCase family.

The protein resides in the cytoplasm. The enzyme catalyses carbamoyl phosphate + L-ornithine = L-citrulline + phosphate + H(+). The protein operates within amino-acid biosynthesis; L-arginine biosynthesis; L-arginine from L-ornithine and carbamoyl phosphate: step 1/3. Its function is as follows. Reversibly catalyzes the transfer of the carbamoyl group from carbamoyl phosphate (CP) to the N(epsilon) atom of ornithine (ORN) to produce L-citrulline. The chain is Ornithine carbamoyltransferase (argF) from Vibrio sp. (strain 2693).